Reading from the N-terminus, the 487-residue chain is V-type proton ATPase subunit B3 (487 aa).

This sequence belongs to the ATPase alpha/beta chains family. In terms of assembly, V-ATPase is a heteromultimeric enzyme composed of a peripheral catalytic V1 complex (components A to H) attached to an integral membrane V0 proton pore complex (components: a, c, c'', d and e).

The protein localises to the vacuole membrane. Functionally, non-catalytic subunit of the peripheral V1 complex of vacuolar ATPase. V-ATPase is responsible for acidifying a variety of intracellular compartments in eukaryotic cells. This Arabidopsis thaliana (Mouse-ear cress) protein is V-type proton ATPase subunit B3 (VHA-B3).